The chain runs to 285 residues: MSATDLASLENAIEAAFENRDNVNVSTRGEVRDAVETALNLLDSGKVRVAERGSDGNWTVNQWLKKAVLLSFRLNDMQIVDGGPGGSTWWDKVPSKFEGWGENRFREAGFRAVPNAVVRRSAYIAPNAILMPSFVNLGAYVGEGTMVDTWATVGSCAQIGKHVHLSGGVGIGGVLEPMQAGPTIIEDNCFIGARSEVVEGCIIREGSVLGMGVFIGKSTKIVDRATGEITYGEVPPYSVVVAGALPNGNTMANGQPAPSLYCAVIVKRVDEKTRSKTGINELLRD.

Positions 111 and 148 each coordinate substrate.

It belongs to the transferase hexapeptide repeat family. In terms of assembly, homotrimer.

It localises to the cytoplasm. It catalyses the reaction (S)-2,3,4,5-tetrahydrodipicolinate + succinyl-CoA + H2O = (S)-2-succinylamino-6-oxoheptanedioate + CoA. It functions in the pathway amino-acid biosynthesis; L-lysine biosynthesis via DAP pathway; LL-2,6-diaminopimelate from (S)-tetrahydrodipicolinate (succinylase route): step 1/3. The polypeptide is 2,3,4,5-tetrahydropyridine-2,6-dicarboxylate N-succinyltransferase (Rhizobium rhizogenes (strain K84 / ATCC BAA-868) (Agrobacterium radiobacter)).